Reading from the N-terminus, the 469-residue chain is Serine hydroxymethyltransferase, cytosolic (469 aa).

Lysine 248 carries the post-translational modification N6-(pyridoxal phosphate)lysine.

It belongs to the SHMT family. As to quaternary structure, homotetramer. It depends on pyridoxal 5'-phosphate as a cofactor.

Its subcellular location is the cytoplasm. The catalysed reaction is (6R)-5,10-methylene-5,6,7,8-tetrahydrofolate + glycine + H2O = (6S)-5,6,7,8-tetrahydrofolate + L-serine. The protein operates within one-carbon metabolism; tetrahydrofolate interconversion. Functionally, interconversion of serine and glycine. The sequence is that of Serine hydroxymethyltransferase, cytosolic (SHM2) from Eremothecium gossypii (strain ATCC 10895 / CBS 109.51 / FGSC 9923 / NRRL Y-1056) (Yeast).